The primary structure comprises 336 residues: Protease HtpX homolog (336 aa).

A run of 2 helical transmembrane segments spans residues 7-24 (AMLL…GFLI) and 29-48 (GMMI…YWNA). Residue H130 participates in Zn(2+) binding. E131 is a catalytic residue. A Zn(2+)-binding site is contributed by H134. The next 2 helical transmembrane spans lie at 145 to 165 (IVAT…FLGG) and 171 to 191 (PFGF…AMIV). Zn(2+) is bound at residue E200. Over residues 278–287 (QQMAGGTQAA) the composition is skewed to low complexity. The segment at 278–336 (QQMAGGTQAAPRPTPRQAGEQQPSGPWGQAPQAEQPAEPERPKANPWGRNPTGPKGRWS) is disordered.

The protein belongs to the peptidase M48B family. Requires Zn(2+) as cofactor.

The protein resides in the cell inner membrane. The sequence is that of Protease HtpX homolog from Mesorhizobium japonicum (strain LMG 29417 / CECT 9101 / MAFF 303099) (Mesorhizobium loti (strain MAFF 303099)).